The sequence spans 294 residues: Protoheme IX farnesyltransferase (294 aa).

Helical transmembrane passes span 25–45 (SLVL…MGAV), 48–68 (LVTL…NCYW), 92–112 (AVAL…LALG), 115–135 (VLTA…YTPL), 141–161 (AAML…WTAV), 170–190 (FSLF…IALF), 216–236 (VVLY…LHIA), 240–260 (YLAA…WGFF), and 272–292 (FFFS…DRVP).

This sequence belongs to the UbiA prenyltransferase family. Protoheme IX farnesyltransferase subfamily.

It is found in the cell inner membrane. It carries out the reaction heme b + (2E,6E)-farnesyl diphosphate + H2O = Fe(II)-heme o + diphosphate. It functions in the pathway porphyrin-containing compound metabolism; heme O biosynthesis; heme O from protoheme: step 1/1. Functionally, converts heme B (protoheme IX) to heme O by substitution of the vinyl group on carbon 2 of heme B porphyrin ring with a hydroxyethyl farnesyl side group. The polypeptide is Protoheme IX farnesyltransferase (Myxococcus xanthus (strain DK1622)).